Consider the following 250-residue polypeptide: NAD(P)H-quinone oxidoreductase subunit K (250 aa).

Cys63, Cys64, Cys128, and Cys159 together coordinate [4Fe-4S] cluster.

This sequence belongs to the complex I 20 kDa subunit family. In terms of assembly, NDH-1 can be composed of about 15 different subunits; different subcomplexes with different compositions have been identified which probably have different functions. [4Fe-4S] cluster serves as cofactor.

The protein localises to the cellular thylakoid membrane. It carries out the reaction a plastoquinone + NADH + (n+1) H(+)(in) = a plastoquinol + NAD(+) + n H(+)(out). It catalyses the reaction a plastoquinone + NADPH + (n+1) H(+)(in) = a plastoquinol + NADP(+) + n H(+)(out). Functionally, NDH-1 shuttles electrons from an unknown electron donor, via FMN and iron-sulfur (Fe-S) centers, to quinones in the respiratory and/or the photosynthetic chain. The immediate electron acceptor for the enzyme in this species is believed to be plastoquinone. Couples the redox reaction to proton translocation, and thus conserves the redox energy in a proton gradient. Cyanobacterial NDH-1 also plays a role in inorganic carbon-concentration. The sequence is that of NAD(P)H-quinone oxidoreductase subunit K from Rippkaea orientalis (strain PCC 8801 / RF-1) (Cyanothece sp. (strain PCC 8801)).